The sequence spans 156 residues: Small ribosomal subunit protein uS7 (156 aa).

This sequence belongs to the universal ribosomal protein uS7 family. Part of the 30S ribosomal subunit. Contacts proteins S9 and S11.

Functionally, one of the primary rRNA binding proteins, it binds directly to 16S rRNA where it nucleates assembly of the head domain of the 30S subunit. Is located at the subunit interface close to the decoding center, probably blocks exit of the E-site tRNA. The protein is Small ribosomal subunit protein uS7 of Clostridium acetobutylicum (strain ATCC 824 / DSM 792 / JCM 1419 / IAM 19013 / LMG 5710 / NBRC 13948 / NRRL B-527 / VKM B-1787 / 2291 / W).